We begin with the raw amino-acid sequence, 272 residues long: Cytosolic Fe-S cluster assembly factor NUBP2 (272 aa).

Gly-23–Ser-30 contacts ATP. The [4Fe-4S] cluster site is built by Cys-197 and Cys-200.

Belongs to the Mrp/NBP35 ATP-binding proteins family. NUBP2/CFD1 subfamily. As to quaternary structure, heterotetramer of 2 NUBP1 and 2 NUBP2 chains. [4Fe-4S] cluster is required as a cofactor.

The protein resides in the cytoplasm. In terms of biological role, component of the cytosolic iron-sulfur (Fe/S) protein assembly (CIA) machinery. Required for maturation of extramitochondrial Fe-S proteins. The NUBP1-NUBP2 heterotetramer forms a Fe-S scaffold complex, mediating the de novo assembly of an Fe-S cluster and its transfer to target apoproteins. This is Cytosolic Fe-S cluster assembly factor NUBP2 from Gallus gallus (Chicken).